The following is a 141-amino-acid chain: Putative pre-16S rRNA nuclease (141 aa).

Belongs to the YqgF nuclease family.

Its subcellular location is the cytoplasm. In terms of biological role, could be a nuclease involved in processing of the 5'-end of pre-16S rRNA. In Coxiella burnetii (strain CbuG_Q212) (Coxiella burnetii (strain Q212)), this protein is Putative pre-16S rRNA nuclease.